Here is a 412-residue protein sequence, read N- to C-terminus: MKMKSLREVDAEIYSLILQEKKRETNKILMIASENYASRAVMEAQGSLFTNKYAEGYPGRRYYGGCEYADEVERLAQERAKQLFNVEHVNVQPHSGTQANMAVYFAMLQPGDTIMGMSLTHGGHLSHGSPVNFTGKLYKTVFYGVNKETGYIDMDEVRRLAQEHKPKIIITGASAYPRTIDFKAFSEIAKEVGAYLMADIAHIAGLIATSMHPSPVPYSDFITTTTHKTLRGPRGGVVMCKAQYAKAIDKTVFPGIQGGPLVHVIAAKAVAFKEALSEDFKEYQKKVIKNAKTLAEALKKKGFKLVSDGTDNHLMLVDLTNFNITGKEAEEALDKAGITVNKNTIPFDTKPPTVTSGIRIGTPSVTTRGMGEEEMEKIAEIIERVIKNISNDSVIKDMQKKVQELCKKFPIY.

(6S)-5,6,7,8-tetrahydrofolate-binding positions include L119 and 123–125 (GHL). N6-(pyridoxal phosphate)lysine is present on K228.

This sequence belongs to the SHMT family. Homodimer. Requires pyridoxal 5'-phosphate as cofactor.

It localises to the cytoplasm. The catalysed reaction is (6R)-5,10-methylene-5,6,7,8-tetrahydrofolate + glycine + H2O = (6S)-5,6,7,8-tetrahydrofolate + L-serine. It participates in one-carbon metabolism; tetrahydrofolate interconversion. Its pathway is amino-acid biosynthesis; glycine biosynthesis; glycine from L-serine: step 1/1. In terms of biological role, catalyzes the reversible interconversion of serine and glycine with tetrahydrofolate (THF) serving as the one-carbon carrier. This reaction serves as the major source of one-carbon groups required for the biosynthesis of purines, thymidylate, methionine, and other important biomolecules. Also exhibits THF-independent aldolase activity toward beta-hydroxyamino acids, producing glycine and aldehydes, via a retro-aldol mechanism. This Thermodesulfovibrio yellowstonii (strain ATCC 51303 / DSM 11347 / YP87) protein is Serine hydroxymethyltransferase.